The following is a 465-amino-acid chain: Serine hydroxymethyltransferase (465 aa).

Position 241 is an N6-(pyridoxal phosphate)lysine (lysine 241).

This sequence belongs to the SHMT family. In terms of assembly, homotetramer. Pyridoxal 5'-phosphate serves as cofactor. As to expression, highest expression in the ovary and testis. 6- to 7-fold lower expression in hemocyte, silk gland, midgut and fat body.

The catalysed reaction is (6R)-5,10-methylene-5,6,7,8-tetrahydrofolate + glycine + H2O = (6S)-5,6,7,8-tetrahydrofolate + L-serine. It participates in one-carbon metabolism; tetrahydrofolate interconversion. Interconversion of serine and glycine. The polypeptide is Serine hydroxymethyltransferase (692975) (Bombyx mori (Silk moth)).